Consider the following 715-residue polypeptide: Palmitoyltransferase ZDHHC5 (715 aa).

The Cytoplasmic portion of the chain corresponds to 1 to 13; that stretch reads MPAESGKRFKPSK. The chain crosses the membrane as a helical span at residues 14-34; sequence YVPVSAAAIFLVGATTLFFAF. Residues 35–38 are Extracellular-facing; sequence TCPG. Residues 39-59 form a helical membrane-spanning segment; sequence LSLYVSPAVPIYNAIMFLFVL. At 60–148 the chain is on the cytoplasmic side; the sequence is ANFSMATFMD…NCIGRRNYRY (89 aa). A Phosphotyrosine; by LYN modification is found at Tyr91. The DHHC domain maps to 104–154; that stretch reads KWCATCRFYRPPRCSHCSVCDNCVEEFDHHCPWVNNCIGRRNYRYFFLFLL. Cys134 functions as the S-palmitoyl cysteine intermediate in the catalytic mechanism. A helical membrane pass occupies residues 149–169; that stretch reads FFLFLLSLTAHIMGVFGFGLL. Residues 170 to 191 lie on the Extracellular side of the membrane; sequence YVLYHIEELSGVRTAVTMAVMC. The helical transmembrane segment at 192–212 threads the bilayer; it reads VAGLFFIPVAGLTGFHVVLVA. Over 213–715 the chain is Cytoplasmic; that stretch reads RGRTTNEQVT…VGGTTYEISV (503 aa). Ser247 is subject to Phosphoserine. The segment at 289-715 is disordered; that stretch reads GELRRTKSKG…VGGTTYEISV (427 aa). Position 294 is a phosphothreonine (Thr294). Ser296 and Ser299 each carry phosphoserine. A Phosphothreonine modification is found at Thr303. Residue Ser345 is modified to Phosphoserine. Thr348 and Thr350 each carry phosphothreonine. The span at 359 to 373 shows a compositional bias: low complexity; the sequence is SSSSTSAAMPHSSSA. A phosphoserine mark is found at Ser380, Ser398, Ser406, and Ser409. Thr411 bears the Phosphothreonine mark. Residues Ser415, Ser425, Ser429, and Ser432 each carry the phosphoserine modification. Residues 422–432 show a composition bias toward low complexity; the sequence is SSGSRSSSLKS. Residue Thr436 is modified to Phosphothreonine. A compositionally biased stretch (polar residues) spans 442-478; the sequence is QLQSIRSEGTTSTSYKSLANQTRNGSLSYDSLLTPSD. Ser529 bears the Phosphoserine mark. Tyr533 is subject to Phosphotyrosine; by FYN. Ser554 carries the phosphoserine modification. Position 617 is an omega-N-methylarginine (Arg617). Ser621 carries the post-translational modification Phosphoserine. Thr659 carries the post-translational modification Phosphothreonine. A compositionally biased stretch (polar residues) spans 666–677; sequence LKTTYSKSNGQP. Phosphoserine is present on residues Ser684 and Ser694. Position 697 is an omega-N-methylarginine (Arg697).

Belongs to the DHHC palmitoyltransferase family. ERF2/ZDHHC9 subfamily. Phosphorylation regulates association with endocytic proteins and its subcellular localization. Phosphorylation by LYN during fatty acid uptake leads to inactivation of the activity. Post-translationally, autopalmitoylated. Palmitoylation of the C-terminal tail regulates stimulation-dependent plasma membrane motility.

It localises to the cell membrane. Its subcellular location is the synapse. The catalysed reaction is L-cysteinyl-[protein] + hexadecanoyl-CoA = S-hexadecanoyl-L-cysteinyl-[protein] + CoA. Palmitoyltransferase that catalyzes the addition of palmitate onto various protein substrates such as CTNND2, CD36, GSDMD, NLRP3, NOD1, NOD2, STAT3 and S1PR1 thus plays a role in various biological processes including cell adhesion, inflammation, fatty acid uptake, bacterial sensing or cardiac functions. Plays an important role in the regulation of synapse efficacy by mediating palmitoylation of delta-catenin/CTNND2, thereby increasing synaptic delivery and surface stabilization of alpha-amino-3-hydroxy-5-methyl-4-isoxazole propionic acid receptors (AMPARs). Under basal conditions, remains at the synaptic membrane through FYN-mediated phosphorylation that prevents association with endocytic proteins. Neuronal activity enhances the internalization and trafficking of DHHC5 from spines to dendritic shafts where it palmitoylates delta-catenin/CTNND2. Regulates cell adhesion at the plasma membrane by palmitoylating GOLGA7B and DSG2. Plays a role in innate immune response by mediating the palmitoylation of NOD1 and NOD2 and their proper recruitment to the bacterial entry site and phagosomes. Also participates in fatty acid uptake by palmitoylating CD36 and thereby targeting it to the plasma membrane. Upon binding of fatty acids to CD36, gets phosphorylated by LYN leading to inactivation and subsequent CD36 caveolar endocytosis. Controls oligodendrocyte development by catalyzing STAT3 palmitoylation. Acts as a regulator of inflammatory response by mediating palmitoylation of NLRP3 and GSDMD. Palmitoylates NLRP3 to promote inflammasome assembly and activation. Activates pyroptosis by catalyzing palmitoylation of gasdermin-D (GSDMD), thereby promoting membrane translocation and pore formation of GSDMD. The polypeptide is Palmitoyltransferase ZDHHC5 (Homo sapiens (Human)).